The following is a 274-amino-acid chain: 4-hydroxy-3-methylbut-2-enyl diphosphate reductase (274 aa).

A [4Fe-4S] cluster-binding site is contributed by C12. (2E)-4-hydroxy-3-methylbut-2-enyl diphosphate contacts are provided by H36 and H70. 2 residues coordinate dimethylallyl diphosphate: H36 and H70. H36 and H70 together coordinate isopentenyl diphosphate. A [4Fe-4S] cluster-binding site is contributed by C92. H120 contacts (2E)-4-hydroxy-3-methylbut-2-enyl diphosphate. H120 contributes to the dimethylallyl diphosphate binding site. H120 is a binding site for isopentenyl diphosphate. Catalysis depends on E122, which acts as the Proton donor. Residue T158 coordinates (2E)-4-hydroxy-3-methylbut-2-enyl diphosphate. C186 provides a ligand contact to [4Fe-4S] cluster. Positions 214, 215, 216, and 258 each coordinate (2E)-4-hydroxy-3-methylbut-2-enyl diphosphate. Residues S214, S215, N216, and S258 each contribute to the dimethylallyl diphosphate site. Positions 214, 215, 216, and 258 each coordinate isopentenyl diphosphate.

Belongs to the IspH family. [4Fe-4S] cluster serves as cofactor.

It catalyses the reaction isopentenyl diphosphate + 2 oxidized [2Fe-2S]-[ferredoxin] + H2O = (2E)-4-hydroxy-3-methylbut-2-enyl diphosphate + 2 reduced [2Fe-2S]-[ferredoxin] + 2 H(+). The enzyme catalyses dimethylallyl diphosphate + 2 oxidized [2Fe-2S]-[ferredoxin] + H2O = (2E)-4-hydroxy-3-methylbut-2-enyl diphosphate + 2 reduced [2Fe-2S]-[ferredoxin] + 2 H(+). It participates in isoprenoid biosynthesis; dimethylallyl diphosphate biosynthesis; dimethylallyl diphosphate from (2E)-4-hydroxy-3-methylbutenyl diphosphate: step 1/1. The protein operates within isoprenoid biosynthesis; isopentenyl diphosphate biosynthesis via DXP pathway; isopentenyl diphosphate from 1-deoxy-D-xylulose 5-phosphate: step 6/6. In terms of biological role, catalyzes the conversion of 1-hydroxy-2-methyl-2-(E)-butenyl 4-diphosphate (HMBPP) into a mixture of isopentenyl diphosphate (IPP) and dimethylallyl diphosphate (DMAPP). Acts in the terminal step of the DOXP/MEP pathway for isoprenoid precursor biosynthesis. The sequence is that of 4-hydroxy-3-methylbut-2-enyl diphosphate reductase from Helicobacter pylori (strain Shi470).